We begin with the raw amino-acid sequence, 244 residues long: Claudin-12 (244 aa).

Residues 1–10 (MGCRDVHAAT) lie on the Cytoplasmic side of the membrane. A helical membrane pass occupies residues 11–31 (VLSFLCGIASVAGLFAGTLLP). Over 32-87 (NWRKLRLITFNRNEKNLTVYTGLWVKCARYDGGNDCLMYDAAWYSSVDQLDLRVLQ) the chain is Extracellular. Residues 88 to 108 (FALPLSILIAMGALLLCLIGM) form a helical membrane-spanning segment. Over 109–135 (CNTAFRSSVPNIKLAKCLVNSAGCHLV) the chain is Cytoplasmic. Residues 136-156 (AGLLFFLAGTVSLSPSIWVIF) traverse the membrane as a helical segment. Over 157 to 174 (YNIHLNRKFEPVFAFDYA) the chain is Extracellular. The helical transmembrane segment at 175 to 195 (VYVTVASAGGLFMTALLLFIW) threads the bilayer. Topologically, residues 196–244 (YCACKSLPSPFWQPLYSHPPGMHTYSQPYSARSRLSAIEIDIPVVSHTT) are cytoplasmic. Residues Ser228 and Ser231 each carry the phosphoserine modification.

This sequence belongs to the claudin family. Interacts with OCLN.

It localises to the cell junction. It is found in the tight junction. The protein resides in the cell membrane. Its function is as follows. Plays a major role in tight junction-specific obliteration of the intercellular space, through calcium-independent cell-adhesion activity. The sequence is that of Claudin-12 (CLDN12) from Bos taurus (Bovine).